The sequence spans 201 residues: Lipoprotein signal peptidase (201 aa).

2 consecutive transmembrane segments (helical) span residues 73-93 (SNAIFLITNTIIVCYLYYLMI) and 97-117 (TIGSFAGYSFVIGGAVGNLID). Catalysis depends on residues Asp-126 and Asp-144. Residues 135-155 (YSFPVFNLADCFITIGVIILI) traverse the membrane as a helical segment.

The protein belongs to the peptidase A8 family.

It is found in the cell inner membrane. The enzyme catalyses Release of signal peptides from bacterial membrane prolipoproteins. Hydrolyzes -Xaa-Yaa-Zaa-|-(S,diacylglyceryl)Cys-, in which Xaa is hydrophobic (preferably Leu), and Yaa (Ala or Ser) and Zaa (Gly or Ala) have small, neutral side chains.. It functions in the pathway protein modification; lipoprotein biosynthesis (signal peptide cleavage). Functionally, this protein specifically catalyzes the removal of signal peptides from prolipoproteins. The protein is Lipoprotein signal peptidase of Rickettsia africae (strain ESF-5).